Reading from the N-terminus, the 571-residue chain is Proline--tRNA ligase (571 aa).

It belongs to the class-II aminoacyl-tRNA synthetase family. ProS type 1 subfamily. As to quaternary structure, homodimer.

The protein resides in the cytoplasm. The enzyme catalyses tRNA(Pro) + L-proline + ATP = L-prolyl-tRNA(Pro) + AMP + diphosphate. Functionally, catalyzes the attachment of proline to tRNA(Pro) in a two-step reaction: proline is first activated by ATP to form Pro-AMP and then transferred to the acceptor end of tRNA(Pro). As ProRS can inadvertently accommodate and process non-cognate amino acids such as alanine and cysteine, to avoid such errors it has two additional distinct editing activities against alanine. One activity is designated as 'pretransfer' editing and involves the tRNA(Pro)-independent hydrolysis of activated Ala-AMP. The other activity is designated 'posttransfer' editing and involves deacylation of mischarged Ala-tRNA(Pro). The misacylated Cys-tRNA(Pro) is not edited by ProRS. The sequence is that of Proline--tRNA ligase from Pseudomonas entomophila (strain L48).